The following is a 204-amino-acid chain: Partner of Y14 and mago (204 aa).

2 disordered regions span residues 1-121 (MGSR…QSVN) and 133-153 (SSNN…EDVE). Over residues 7–36 (EQGKRMAELSKNLKEGERILEPTRRPDGTL) the composition is skewed to basic and acidic residues. Residues 104–121 (KANSSEDGSASNGSQSVN) show a composition bias toward polar residues. The Nuclear export signal motif lies at 195–200 (ELKALE).

Belongs to the pym family. In terms of assembly, interacts with MAGO and Y14. Expressed in root and shoot meristems, cotyledons, vascular tissues of leaves, receptacle of flowers and siliques, and pollen grains.

It is found in the cytoplasm. It localises to the nucleus. Its subcellular location is the nucleolus. The protein resides in the nucleoplasm. In terms of biological role, key regulator of the exon junction complex (EJC), a multiprotein complex that associates immediately upstream of the exon-exon junction on mRNAs and serves as a positional landmark for the intron exon structure of genes and directs post-transcriptional processes in the cytoplasm such as mRNA export, nonsense-mediated mRNA decay (NMD) or translation. Acts as an EJC disassembly factor, allowing translation-dependent EJC removal and recycling by disrupting mature EJC from spliced mRNAs. Can increase in vitro the expression from reporter constructs that contain leader introns required for the expression of different genes. In association with MAGO and PYM, participates in intron-mediated enhancement of gene expression. This is Partner of Y14 and mago from Arabidopsis thaliana (Mouse-ear cress).